The following is a 339-amino-acid chain: D-erythrose-4-phosphate dehydrogenase (339 aa).

Position 11–12 (11–12) interacts with NAD(+); sequence RI. Substrate is bound by residues 158–160, Arg-204, 217–218, and Arg-240; these read SCT and TK. Cys-159 serves as the catalytic Nucleophile. Asn-322 is a binding site for NAD(+).

It belongs to the glyceraldehyde-3-phosphate dehydrogenase family. Epd subfamily. As to quaternary structure, homotetramer.

The protein localises to the cytoplasm. It carries out the reaction D-erythrose 4-phosphate + NAD(+) + H2O = 4-phospho-D-erythronate + NADH + 2 H(+). It participates in cofactor biosynthesis; pyridoxine 5'-phosphate biosynthesis; pyridoxine 5'-phosphate from D-erythrose 4-phosphate: step 1/5. Functionally, catalyzes the NAD-dependent conversion of D-erythrose 4-phosphate to 4-phosphoerythronate. This Aliivibrio fischeri (strain MJ11) (Vibrio fischeri) protein is D-erythrose-4-phosphate dehydrogenase.